The chain runs to 100 residues: Urease subunit gamma (100 aa).

Belongs to the urease gamma subunit family. As to quaternary structure, heterotrimer of UreA (gamma), UreB (beta) and UreC (alpha) subunits. Three heterotrimers associate to form the active enzyme.

Its subcellular location is the cytoplasm. It catalyses the reaction urea + 2 H2O + H(+) = hydrogencarbonate + 2 NH4(+). The protein operates within nitrogen metabolism; urea degradation; CO(2) and NH(3) from urea (urease route): step 1/1. The chain is Urease subunit gamma from Sinorhizobium fredii (strain NBRC 101917 / NGR234).